Here is a 116-residue protein sequence, read N- to C-terminus: Mercuric transport protein MerT (116 aa).

Transmembrane regions (helical) follow at residues 16–36 (LAAILASACCLGPLVLIALGF) and 46–66 (VLEPYRPIFIGAALVALFFAW). 2 residues coordinate Hg(2+): cysteine 24 and cysteine 25. Hg(2+) is bound by residues cysteine 76 and cysteine 82. A helical transmembrane segment spans residues 94–114 (IFWFVAVLVLVALGFPYVMPF).

The protein belongs to the MerT family.

The protein resides in the cell inner membrane. Functionally, involved in mercury resistance. Probably transfers a mercuric ion from the periplasmic Hg(2+)-binding protein MerP to the cytoplasmic mercuric reductase MerA. This is Mercuric transport protein MerT from Acinetobacter calcoaceticus.